We begin with the raw amino-acid sequence, 169 residues long: 3-hydroxyacyl-[acyl-carrier-protein] dehydratase FabZ (169 aa).

Residue His-74 is part of the active site.

It belongs to the thioester dehydratase family. FabZ subfamily.

Its subcellular location is the cytoplasm. The enzyme catalyses a (3R)-hydroxyacyl-[ACP] = a (2E)-enoyl-[ACP] + H2O. Functionally, involved in unsaturated fatty acids biosynthesis. Catalyzes the dehydration of short chain beta-hydroxyacyl-ACPs and long chain saturated and unsaturated beta-hydroxyacyl-ACPs. This chain is 3-hydroxyacyl-[acyl-carrier-protein] dehydratase FabZ, found in Gluconobacter oxydans (strain 621H) (Gluconobacter suboxydans).